We begin with the raw amino-acid sequence, 161 residues long: Anthrone oxygenase tpcL (161 aa).

The N-linked (GlcNAc...) asparagine glycan is linked to Asn-4. 4 consecutive transmembrane segments (helical) span residues 15–35 (VITG…DIPV), 56–74 (IGHK…LYGY), 87–107 (LPHI…WLVM), and 136–155 (WAQL…VLGL).

It belongs to the anthrone oxygenase family. Specifically expressed in conidia.

It is found in the membrane. The enzyme catalyses emodin anthrone + O2 = emodin + H2O + H(+). The protein operates within secondary metabolite biosynthesis. Anthrone oxygenase; part of the gene cluster that mediates the biosynthesis of trypacidin, a mycotoxin with antiprotozoal activity and that plays a role in the infection process. The pathway begins with the synthesis of atrochrysone thioester by the polyketide synthase (PKS) tpcC. The atrochrysone carboxyl ACP thioesterase tpcB then breaks the thioester bond and releases the atrochrysone carboxylic acid from tpcC. The decarboxylase tpcK converts atrochrysone carboxylic acid to atrochrysone which is further reduced into emodin anthrone. The next step is performed by the emodin anthrone oxygenase tpcL that catalyzes the oxidation of emodinanthrone to emodin. Emodin O-methyltransferase encoded by tpcA catalyzes methylation of the 8-hydroxy group of emodin to form questin. Ring cleavage of questin by questin oxidase tpcI leads to desmethylsulochrin via several intermediates including questin epoxide. Another methylation step catalyzed by tpcM leads to the formation of sulochrin which is further converted to monomethylsulfochrin by tpcH. Finally, the tpcJ catalyzes the conversion of monomethylsulfochrin to trypacidin. Trypacidin is toxic for human pulmonary and bronchial epithelial cells by initiating the intracellular formation of nitric oxide (NO) and hydrogen peroxide (H(2)O(2)), thus triggering host necrotic cell death. The trypacidin pathway is also able to produce endocrocin via a distinct route from the endocrocin Enc pathway. This chain is Anthrone oxygenase tpcL, found in Aspergillus fumigatus (strain ATCC MYA-4609 / CBS 101355 / FGSC A1100 / Af293) (Neosartorya fumigata).